A 251-amino-acid polypeptide reads, in one-letter code: Small ribosomal subunit protein uS3 (251 aa).

One can recognise a KH type-2 domain in the interval 39-109 (IRNYVLARLK…EVKIDVVEVI (71 aa)). Basic and acidic residues predominate over residues 221 to 239 (EMKRMKDRRADSKSRPRDP). The tract at residues 221–251 (EMKRMKDRRADSKSRPRDPRSKRRRSRTKRA) is disordered. The span at 240–251 (RSKRRRSRTKRA) shows a compositional bias: basic residues.

Belongs to the universal ribosomal protein uS3 family. In terms of assembly, part of the 30S ribosomal subunit. Forms a tight complex with proteins S10 and S14.

Its function is as follows. Binds the lower part of the 30S subunit head. Binds mRNA in the 70S ribosome, positioning it for translation. The sequence is that of Small ribosomal subunit protein uS3 from Chlorobium limicola (strain DSM 245 / NBRC 103803 / 6330).